A 524-amino-acid chain; its full sequence is Cytochrome P450 monooxygenase alt1 (524 aa).

A helical transmembrane segment spans residues 24–44 (IANMLSVIAFSICISPIVYFL). Cys-469 is a heme binding site.

Belongs to the cytochrome P450 family. The cofactor is heme.

The protein localises to the membrane. Its pathway is secondary metabolite biosynthesis. Its function is as follows. Cytochrome P450 monooxygenase; part of the gene cluster that mediates the biosynthesis of alternapyrone derivatives. Alternapyrone is a decaketide with octa-methylation from methionine on every C2 unit except the third unit. All the domains in the polyketide synthase alt5 are apparently involved in alternapyrone synthesis, that is, the 8 CMeT, 7 KR, 7 DH, and 4 ER reactions in the 9 KS-mediated condensation steps required for alternapyrone synthesis. the alternapyrone produced by alt5 might be intensively modified by cytochrome P450 monooxygenases alt1, alt2 and alt3 and FAD-dependent oxidoreductase alt4 present in the alt gene cluster. The protein is Cytochrome P450 monooxygenase alt1 of Alternaria solani.